The primary structure comprises 891 residues: DNA mismatch repair protein MutS (891 aa).

646–653 (GPNMAGKS) contributes to the ATP binding site.

Belongs to the DNA mismatch repair MutS family.

In terms of biological role, this protein is involved in the repair of mismatches in DNA. It is possible that it carries out the mismatch recognition step. This protein has a weak ATPase activity. The sequence is that of DNA mismatch repair protein MutS from Rickettsia massiliae (strain Mtu5).